The primary structure comprises 344 residues: Phosphoribosylformylglycinamidine cyclo-ligase (344 aa).

Belongs to the AIR synthase family.

Its subcellular location is the cytoplasm. It carries out the reaction 2-formamido-N(1)-(5-O-phospho-beta-D-ribosyl)acetamidine + ATP = 5-amino-1-(5-phospho-beta-D-ribosyl)imidazole + ADP + phosphate + H(+). The protein operates within purine metabolism; IMP biosynthesis via de novo pathway; 5-amino-1-(5-phospho-D-ribosyl)imidazole from N(2)-formyl-N(1)-(5-phospho-D-ribosyl)glycinamide: step 2/2. This Laribacter hongkongensis (strain HLHK9) protein is Phosphoribosylformylglycinamidine cyclo-ligase.